Here is a 265-residue protein sequence, read N- to C-terminus: uncharacterized protein (265 aa).

A divalent metal cation contacts are provided by histidine 7, histidine 9, glutamate 95, histidine 131, histidine 156, and aspartate 206.

Belongs to the metallo-dependent hydrolases superfamily. TatD-type hydrolase family. The cofactor is a divalent metal cation.

This is an uncharacterized protein from Buchnera aphidicola subsp. Baizongia pistaciae (strain Bp).